We begin with the raw amino-acid sequence, 250 residues long: Petrobactin import ATP-binding protein FatE (250 aa).

The region spanning 2–236 (IKIDNVKKFY…TLLTDIFETR (235 aa)) is the ABC transporter domain. 34–41 (GPNGAGKS) serves as a coordination point for ATP.

Belongs to the ABC transporter superfamily. The complex is composed of two ATP-binding proteins (FatE), two transmembrane proteins (FatC and FatD) and a solute-binding protein (FpuA).

It is found in the cell membrane. The catalysed reaction is a Fe(III)-siderophore(out) + ATP + H2O = a Fe(III)-siderophore(in) + ADP + phosphate + H(+). Its function is as follows. Part of an ABC transporter complex involved in ferric-petrobactin uptake. Probably responsible for energy coupling to the transport system. The protein is Petrobactin import ATP-binding protein FatE of Bacillus anthracis.